Reading from the N-terminus, the 235-residue chain is MVPETGLAPETGSSGTVAAVVPAAGSGERLAAGIPKAFCEIDGASMLARAVAGLLDSKVVDHVVVAVPADRVDEAKRLLPGQATVVAGGADRTASVRLALAAVPGNPAFVLVHDAARALTPPALIARVVQALRDGHRAVVPALPLHDTVKAVDANGVVLGTPERDGLRAVQTPQGFATDLLLRAYAAGAGTAGFTDDASLVEHVGGQVQVVDGDPLAFKITTQLDLLLAETIVRR.

The protein belongs to the IspD/TarI cytidylyltransferase family. IspD subfamily.

The catalysed reaction is 2-C-methyl-D-erythritol 4-phosphate + CTP + H(+) = 4-CDP-2-C-methyl-D-erythritol + diphosphate. The protein operates within isoprenoid biosynthesis; isopentenyl diphosphate biosynthesis via DXP pathway; isopentenyl diphosphate from 1-deoxy-D-xylulose 5-phosphate: step 2/6. In terms of biological role, catalyzes the formation of 4-diphosphocytidyl-2-C-methyl-D-erythritol from CTP and 2-C-methyl-D-erythritol 4-phosphate (MEP). The sequence is that of 2-C-methyl-D-erythritol 4-phosphate cytidylyltransferase from Mycolicibacterium paratuberculosis (strain ATCC BAA-968 / K-10) (Mycobacterium paratuberculosis).